Here is an 892-residue protein sequence, read N- to C-terminus: MSERAADDVRGEPRRAAAAAGGAAAAAARQQQQQQQQQQPPPPQPQRQQHPPPPPRRTRPEDGGPGAASTSAAAMATVGERRPLPSPEVMLGQSWNLWVEASKLPGKDGTELDESFKEFGKNREVMGLCREDMPIFGFCPAHDDFYLVVCNDCNQVVKPQAFQSHYERRHSSSSKPPLAVPPTSVFSFFPSLSKSKGGSASGSNRSSSGGVLSASSSSSKLLKSPKEKLQLRGNTRPMHPIQQSRVPHGRIMTPSVKVEKIHPKMDGTLLKSAVGPTCPATVSSLVKPGLNCPSIPKPTLPSPGQILNGKGLPAPPTLEKKPEDNSNNRKFLNKRLSEREFDPDIHCGVIDLDTKKPCTRSLTCKTHSLTQRRAVQGRRKRFDVLLAEHKNKTREKELIRHPDSQQPPQPLRDPHPAPPRTSQEPHQNPHGVIPSESKPFVASKPKPHTPSLPRPPGCPAQQGGSAPIDPPPVHESPHPPLPATEPASRLSSEEGEGDDKEESVEKLDCHYSGHHPQPASFCTFGSRQIGRGYYVFDSRWNRLRCALNLMVEKHLNAQLWKKIPPVPSTTSPISTRIPHRTNSVPTSQCGVSYLAAATVSTSPVLLSSTCISPNSKSVPAHGTTLNAQPAASGAMDPVCSMQSRQVSSSSSSPSTPSGLSSVPSSPMSRKPQKLKSSKSLRPKESSGNSTNCQNASSSTSGGSGKKRKNSSPLLVHSSSSSSSSSSSSHSMESFRKNCVAHSGPPYPSTVTSSHSIGLNCVTNKANAVNVRHDQSGRGPPTGSPAESIKRMSVMVNSSDSTLSLGPFIHQSNELPVNSHGSFSHSHTPLDKLIGKKRKCSPSSSSINNSSSKPTKVAKVPAVNNVHMKHTGTIPGAQGLMNSSLLHQPKARP.

Residues 1 to 15 (MSERAADDVRGEPRR) are compositionally biased toward basic and acidic residues. Disordered stretches follow at residues 1 to 74 (MSER…SAAA) and 195 to 247 (SKGG…SRVP). Over residues 16-38 (AAAAAGGAAAAAARQQQQQQQQQ) the composition is skewed to low complexity. Residues 39–55 (QPPPPQPQRQQHPPPPP) show a composition bias toward pro residues. The span at 195–222 (SKGGSASGSNRSSSGGVLSASSSSSKLL) shows a compositional bias: low complexity. A Glycyl lysine isopeptide (Lys-Gly) (interchain with G-Cter in SUMO); alternate cross-link involves residue K257. A Glycyl lysine isopeptide (Lys-Gly) (interchain with G-Cter in SUMO2); alternate cross-link involves residue K257. Disordered regions lie at residues 298–328 (PTLP…NSNN), 389–505 (HKNK…ESVE), 616–730 (KSVP…SSHS), and 818–892 (SHGS…KARP). 2 stretches are compositionally biased toward basic and acidic residues: residues 318–327 (LEKKPEDNSN) and 389–403 (HKNK…RHPD). Residues 334-401 (KRLSEREFDP…KTREKELIRH (68 aa)) enclose the SCA7 domain. Composition is skewed to pro residues over residues 405-419 (QQPP…PAPP), 448-458 (HTPSLPRPPGC), and 468-483 (IDPP…PLPA). A compositionally biased stretch (acidic residues) spans 493–502 (EEGEGDDKEE). Residues 616 to 629 (KSVPAHGTTLNAQP) are compositionally biased toward polar residues. The segment covering 640–669 (SMQSRQVSSSSSSPSTPSGLSSVPSSPMSR) has biased composition (low complexity). Basic residues predominate over residues 670–680 (KPQKLKSSKSL). Polar residues predominate over residues 685–695 (SSGNSTNCQNA). Low complexity-rich tracts occupy residues 716 to 730 (HSSS…SSHS) and 840 to 851 (SPSSSSINNSSS).

This sequence belongs to the ataxin-7 family. As to quaternary structure, component of the SAGA transcription coactivator-HAT complex, at least composed of SUPT3H, GCN5L2, TAF5L, TAF6L, SUPT7L, TADA3L, TAD1L, TAF10, TAF12, TRRAP, TAF9 and ATXN7. The STAGA core complex is associated with a subcomplex required for histone deubiquitination composed of ATXN7L3, ENY2 and USP22. Interacts with SORBS1, PSMC1 and CRX. Interacts with TRRAP, GCN5L2 and TAF10. Interacts with alpha tubulin. In terms of processing, proteolytically cleaved by caspase-7 (CASP7). The cleavage may be involved in SCA7 degeneration: the isoform fragments may exert distinct toxic influences that could contribute to selective neurodegeneration. Sumoylation decreases the aggregation propensity and cellular toxicity of forms with an expanded poly-Gln region but has no effect on subcellular location or interaction with components of the STAGA complex. In terms of tissue distribution, isoform a is expressed in CNS, but is expressed predominantly in the peripherical tissues. As to expression, isoform b is expressed in CNS. Also highly expressed in the frontal lobe, skeletal muscle and spinal cord and is expressed at a lower level in the lung, lymphoblast and intestine.

The protein localises to the nucleus. It localises to the nucleolus. Its subcellular location is the nucleus matrix. It is found in the cytoplasm. The protein resides in the cytoskeleton. Acts as a component of the SAGA (aka STAGA) transcription coactivator-HAT complex. Mediates the interaction of SAGA complex with the CRX and is involved in CRX-dependent gene activation. Probably involved in tethering the deubiquitination module within the SAGA complex. Necessary for microtubule cytoskeleton stabilization. Involved in neurodegeneration. The chain is Ataxin-7 (ATXN7) from Homo sapiens (Human).